A 350-amino-acid polypeptide reads, in one-letter code: MQGNGSALPNASQPVLRGDGARPSWLASALACVLIFTIVVDILGNLLVILSVYRNKKLRNAGNIFVVSLAVADLVVAIYPYPLVLMSIFNNGWNLGYLHCQVSGFLMGLSVIGSIFNITGIAINRYCYICHSLKYDKLYSSKNSLCYVLLIWLLTLAAVLPNLRAGTLQYDPRIYSCTFAQSVSSAYTIAVVVFHFLVPMIIVIFCYLRIWILVLQVRQRVKPDRKPKLKPQDFRNFVTMFVVFVLFAICWAPLNFIGLAVASDPASMVPRIPEWLFVASYYMAYFNSCLNAIIYGLLNQNFRKEYRRIIVSLCTARVFFVDSSNDVADRVKWKPSPLMTNNNVVKVDSV.

The Extracellular portion of the chain corresponds to 1 to 29 (MQGNGSALPNASQPVLRGDGARPSWLASA). Asparagine 4 and asparagine 10 each carry an N-linked (GlcNAc...) asparagine glycan. A helical membrane pass occupies residues 30-50 (LACVLIFTIVVDILGNLLVIL). Residues 51 to 63 (SVYRNKKLRNAGN) lie on the Cytoplasmic side of the membrane. Residues 64–84 (IFVVSLAVADLVVAIYPYPLV) form a helical membrane-spanning segment. The Extracellular portion of the chain corresponds to 85–102 (LMSIFNNGWNLGYLHCQV). Residues cysteine 100 and cysteine 177 are joined by a disulfide bond. A helical transmembrane segment spans residues 103–123 (SGFLMGLSVIGSIFNITGIAI). The Cytoplasmic segment spans residues 124-142 (NRYCYICHSLKYDKLYSSK). The chain crosses the membrane as a helical span at residues 143 to 163 (NSLCYVLLIWLLTLAAVLPNL). 2 residues coordinate melatonin: asparagine 162 and glutamine 181. At 164–187 (RAGTLQYDPRIYSCTFAQSVSSAY) the chain is on the extracellular side. Residues 188-208 (TIAVVVFHFLVPMIIVIFCYL) traverse the membrane as a helical segment. Residues 209–240 (RIWILVLQVRQRVKPDRKPKLKPQDFRNFVTM) lie on the Cytoplasmic side of the membrane. A helical transmembrane segment spans residues 241–261 (FVVFVLFAICWAPLNFIGLAV). The Extracellular segment spans residues 262-274 (ASDPASMVPRIPE). A helical transmembrane segment spans residues 275–295 (WLFVASYYMAYFNSCLNAIIY). Residues 296–350 (GLLNQNFRKEYRRIIVSLCTARVFFVDSSNDVADRVKWKPSPLMTNNNVVKVDSV) lie on the Cytoplasmic side of the membrane.

The protein belongs to the G-protein coupled receptor 1 family. Expressed in hypophyseal pars tuberalis and hypothalamic suprachiasmatic nuclei (SCN). Hippocampus.

Its subcellular location is the cell membrane. Its function is as follows. High affinity receptor for melatonin. Likely to mediate the reproductive and circadian actions of melatonin. The activity of this receptor is mediated by pertussis toxin sensitive G proteins that inhibit adenylate cyclase activity. Possibly involved in sleep induction, by melatonin activation of the potassium channel KCNMA1/BK and the dissociation of G-beta and G-gamma subunits, thereby decreasing synaptic transmission. In Homo sapiens (Human), this protein is Melatonin receptor type 1A (MTNR1A).